Here is a 101-residue protein sequence, read N- to C-terminus: Movement protein (101 aa).

A helical membrane pass occupies residues 30-50 (EVAVLSFVALICIYLLYLWVL). Positions 78–101 (RSPIPNTLEPTAPVHPGPFVPGSG) are disordered. A compositionally biased stretch (pro residues) spans 90–101 (PVHPGPFVPGSG).

Belongs to the mastrevirus movement protein family. In terms of assembly, interacts with the capsid protein (CP). Part of a MP-CP-viral DNA complex.

It is found in the host membrane. Its function is as follows. Involved in the viral transport within, and between cells. In Maize streak virus genotype E (isolate Pat) (MSV), this protein is Movement protein.